An 834-amino-acid polypeptide reads, in one-letter code: Ras GTPase-activating protein 3 (834 aa).

2 consecutive C2 domains span residues 1–112 (MAVE…DTWF) and 123–263 (VQGK…EAWY). Alanine 2 is subject to N-acetylalanine. Position 66 is a phosphotyrosine (tyrosine 66). Serine 77 is subject to Phosphoserine. Threonine 110 carries the phosphothreonine modification. Residues 346–561 (GRVVPFISAI…DAVKNFLDLI (216 aa)) form the Ras-GAP domain. The PH domain maps to 576-677 (ILLKEGFMIK…WIDILTKVSQ (102 aa)). Residues 679–715 (NQKRLTVFHPSAYLNGHWLCCRASSDTAAGCTPCTGG) form a Btk-type zinc finger. Zn(2+) is bound by residues histidine 687, cysteine 698, cysteine 699, and cysteine 709. Phosphoserine is present on residues serine 809 and serine 833.

High levels in brain, lower in spleen and lung.

Functionally, inhibitory regulator of the Ras-cyclic AMP pathway. May bind inositol tetrakisphosphate (IP4). The polypeptide is Ras GTPase-activating protein 3 (Rasa3) (Mus musculus (Mouse)).